Reading from the N-terminus, the 454-residue chain is MKISLTNRVRTTIRERKLFREGDRLVLVALSGGADSVALLCVLRELGYETVAAHCNFHLRGVESDEDAAFVERLCRDLDVPLHRIDFDTVRYARERSISIEMAARELRYEWFGQLRKELAIEYVAVAHHADDNAETMVLNLCRGTGISGLCGMPYKRNDGIVRPLLDATRDEIEAYLLDQKITYRTDSSNEDTRFRRNLVRHRIMPLLKELNPSLQEALLRTRENLEGVAAFYSKATEDFHNTLRATSSISIREVKETPAPFTLLYDLLHPYGFNRDQIREVATSLDNPPGASFFSSSHRLLRERDRLTVLPLSPKMEVPELFGLKIGDSFLDLPDGKQLSWQRGTPADLDLEGLRLPNTKLLLPLAFVESLQEELGVRRPQRGDHIHPYGMKGCKTVSRFFIDRHVPRSRREEAWLLCQGTEVVWIMGYAADRRFAIDELSDTEEYLLFSFGL.

31–36 (SGGADS) lines the ATP pocket.

It belongs to the tRNA(Ile)-lysidine synthase family.

The protein resides in the cytoplasm. It carries out the reaction cytidine(34) in tRNA(Ile2) + L-lysine + ATP = lysidine(34) in tRNA(Ile2) + AMP + diphosphate + H(+). In terms of biological role, ligates lysine onto the cytidine present at position 34 of the AUA codon-specific tRNA(Ile) that contains the anticodon CAU, in an ATP-dependent manner. Cytidine is converted to lysidine, thus changing the amino acid specificity of the tRNA from methionine to isoleucine. The protein is tRNA(Ile)-lysidine synthase of Porphyromonas gingivalis (strain ATCC BAA-308 / W83).